Reading from the N-terminus, the 500-residue chain is FAD-linked oxidoreductase srdI (500 aa).

A signal peptide spans 1 to 20 (MHLSSSLLFTSALLAGGINA). Residue N47 is glycosylated (N-linked (GlcNAc...) asparagine). The FAD-binding PCMH-type domain maps to 69–241 (YRPPSYQAAI…TQATYKMHKS (173 aa)). 2 N-linked (GlcNAc...) asparagine glycosylation sites follow: N257 and N282.

The protein belongs to the oxygen-dependent FAD-linked oxidoreductase family. It depends on FAD as a cofactor.

In terms of biological role, FAD-linked oxidoreductase; part of the gene cluster that mediates the biosynthesis of sordarial, a salicylic aldehyde structurally related to the phytotoxin pyriculol. The most interesting aspect of this pathway is formation of an aromatic product from the highly reducing polyketide synthase srdA. SrdA synthesizes a reduced polyketide chain from one molecule of acetyl-CoA and five molecules of malonyl-CoA. The polyketide chain is then reductively released as an aldehyde. The oxidoreductases srdC, srdD and srdE then oxidize one of the hydroxy groups to facilitate the intramolecular aldol condensation, followed by dehydration to yield a salicylic aldehyde. This aldehyde can undergo facile reduction by endogenous reductases to yield the alcohol 1-hydroxy-2-hydroxymethyl-3-pent-1,3-dienylbenzene. The flavin-dependent srdI counteract against the propensity of the aldehydes to be reduced under physiological conditions and is responsible for reoxidizing 1-hydroxy-2-hydroxymethyl-3-pent-1,3-dienylbenzene back to the salicylic aldehyde. This salicylic aldehyde is then selectively epoxidized by the cupin-domain-containing oxidoreductase srdB to yield the epoxide, which can be hydrolyzed stereoselectively by the hydrolase srdG to give the final product sordarial. In Neurospora crassa (strain ATCC 24698 / 74-OR23-1A / CBS 708.71 / DSM 1257 / FGSC 987), this protein is FAD-linked oxidoreductase srdI.